Consider the following 320-residue polypeptide: Protein PR73 (320 aa).

The Cytoplasmic segment spans residues 1–44; that stretch reads MPRLQQKWLNSRECPTLRGEAAKGLFPTKDDPSAHKRMSPSDKD. The helical transmembrane segment at 45–65 threads the bilayer; sequence ILILCCKLGIALLCLGLLGEV. The Extracellular segment spans residues 66–319; it reads AVRARRALTL…SAKTYGMSYY (254 aa). Residues Asn-79, Asn-89, Asn-93, Asn-131, and Asn-146 are each glycosylated (N-linked (GlcNAc...) asparagine; by host).

This sequence belongs to the mouse mammary tumor virus PR73 superantigen family.

It localises to the membrane. Functionally, superantigen. This chain is Protein PR73, found in Mouse mammary tumor virus (strain BR6) (MMTV).